Reading from the N-terminus, the 123-residue chain is Intracellular iron chaperone frataxin (123 aa).

In terms of assembly, homodimer, upon Fe(2+) binding. Interacts with the SufS/SufU complex. Interacts with CpfC. Fe(2+) serves as cofactor.

It localises to the cytoplasm. In terms of biological role, plays an essential role in iron intracellular trafficking to iron cofactor biogenesis systems including iron-sulfur cluster (Fe-S) or heme assembly. Promotes the biosynthesis of iron-sulfur clusters by delivering Fe to the complex composed of the cysteine desulfurase SufS and the zinc-dependent sulfurtransferase SufU. Also plays a critical role in coproporphyrin-dependent heme b biogenesis and thus provides an essential function for the bacterial global metabolism. This chain is Intracellular iron chaperone frataxin (fra), found in Bacillus subtilis (strain 168).